Reading from the N-terminus, the 413-residue chain is Tryptophan synthase beta chain (413 aa).

Position 107 is an N6-(pyridoxal phosphate)lysine (Lys107).

This sequence belongs to the TrpB family. In terms of assembly, tetramer of two alpha and two beta chains. Requires pyridoxal 5'-phosphate as cofactor.

The catalysed reaction is (1S,2R)-1-C-(indol-3-yl)glycerol 3-phosphate + L-serine = D-glyceraldehyde 3-phosphate + L-tryptophan + H2O. Its pathway is amino-acid biosynthesis; L-tryptophan biosynthesis; L-tryptophan from chorismate: step 5/5. The beta subunit is responsible for the synthesis of L-tryptophan from indole and L-serine. The sequence is that of Tryptophan synthase beta chain from Trichormus variabilis (strain ATCC 29413 / PCC 7937) (Anabaena variabilis).